Reading from the N-terminus, the 124-residue chain is Small ribosomal subunit protein uS12 (124 aa).

Residues 1-30 are disordered; that stretch reads MPTIQQLVRKGRTPKVTKTKAPALKANPQQ. Residues 9–18 are compositionally biased toward basic residues; that stretch reads RKGRTPKVTK.

This sequence belongs to the universal ribosomal protein uS12 family. Part of the 30S ribosomal subunit. Contacts proteins S8 and S17. May interact with IF1 in the 30S initiation complex.

In terms of biological role, with S4 and S5 plays an important role in translational accuracy. Interacts with and stabilizes bases of the 16S rRNA that are involved in tRNA selection in the A site and with the mRNA backbone. Located at the interface of the 30S and 50S subunits, it traverses the body of the 30S subunit contacting proteins on the other side and probably holding the rRNA structure together. The combined cluster of proteins S8, S12 and S17 appears to hold together the shoulder and platform of the 30S subunit. The polypeptide is Small ribosomal subunit protein uS12 (Leifsonia xyli subsp. xyli (strain CTCB07)).